We begin with the raw amino-acid sequence, 263 residues long: MTITEPYSPNNQPITFAQITDSHLFSSVDGLHHGHNVLANLKKVLLSICDNPSIKYIIFTGDLTQDHTEQSYQNFVDCVLECHITVPIYYLAGNHDEPKLLDKYFSASPFQADKEINLSHWQVQLVDSKSATPAGYVGEQALVKLKDAIQKNKNQLLMMHHHPIDVGYFIDKHGLQNKDAFWQVINSYDNIKAIACGHVHGDMTLTNAITSPINEPVVLYTCPATSIQFDPTVDGVAALSKGPGYRLFSLYADGQLNTEVVML.

Fe cation-binding residues include D21, H23, D62, N94, H160, H198, and H200. AMP is bound by residues H23, D62, and 94–95 (NH). H200 lines the AMP pocket.

This sequence belongs to the cyclic nucleotide phosphodiesterase class-III family. Fe(2+) serves as cofactor.

In Colwellia psychrerythraea (strain 34H / ATCC BAA-681) (Vibrio psychroerythus), this protein is Probable cyclic nucleotide phosphodiesterase CPS_4178.